The chain runs to 263 residues: Ribonuclease HII (263 aa).

Positions 71–262 (QAIAGIDEVG…VKSMCCDSTN (192 aa)) constitute an RNase H type-2 domain. Residues aspartate 77, glutamate 78, and aspartate 172 each contribute to the a divalent metal cation site.

It belongs to the RNase HII family. Mn(2+) is required as a cofactor. The cofactor is Mg(2+).

The protein resides in the cytoplasm. The catalysed reaction is Endonucleolytic cleavage to 5'-phosphomonoester.. Endonuclease that specifically degrades the RNA of RNA-DNA hybrids. The chain is Ribonuclease HII from Streptococcus pyogenes serotype M4 (strain MGAS10750).